A 36-amino-acid chain; its full sequence is Photosystem II reaction center protein M (36 aa).

The chain crosses the membrane as a helical span at residues 7 to 27 (GFVASLMFVLVPTVFLIVLFI).

Belongs to the PsbM family. In terms of assembly, PSII is composed of 1 copy each of membrane proteins PsbA, PsbB, PsbC, PsbD, PsbE, PsbF, PsbH, PsbI, PsbJ, PsbK, PsbL, PsbM, PsbT, PsbX, PsbY, PsbZ, Psb30/Ycf12, peripheral proteins PsbO, CyanoQ (PsbQ), PsbU, PsbV and a large number of cofactors. It forms dimeric complexes.

It localises to the cellular thylakoid membrane. One of the components of the core complex of photosystem II (PSII). PSII is a light-driven water:plastoquinone oxidoreductase that uses light energy to abstract electrons from H(2)O, generating O(2) and a proton gradient subsequently used for ATP formation. It consists of a core antenna complex that captures photons, and an electron transfer chain that converts photonic excitation into a charge separation. This subunit is found at the monomer-monomer interface. The protein is Photosystem II reaction center protein M of Synechococcus sp. (strain CC9311).